The sequence spans 308 residues: Putative glutamine amidotransferase Rv2859c (308 aa).

Residues 1–62 (MDLSASRSDG…ASPRLRSPLG (62 aa)) are disordered. Composition is skewed to low complexity over residues 13–24 (PLRPASPRLRSP), 31–42 (PLRPASPRLRSP), and 49–61 (PLRP…RSPL). The 224-residue stretch at 78–301 (RTGVWDIPAG…VDAASGYAGR (224 aa)) folds into the Glutamine amidotransferase type-1 domain. The Nucleophile role is filled by Cys-177. Active-site residues include His-277 and Glu-279. An Isoglutamyl lysine isopeptide (Lys-Gln) (interchain with Q-Cter in protein Pup) cross-link involves residue Lys-289.

This is Putative glutamine amidotransferase Rv2859c from Mycobacterium tuberculosis (strain ATCC 25618 / H37Rv).